A 443-amino-acid polypeptide reads, in one-letter code: MSFFGSSHFGLPRLKPLSSKRSHIVSVLDIGSTKVVCMIGRLTPRQESEILPGRTHKVEIIGIGHQRSRGVKSGVIADLDALEGVIRLSVDAAERMAGLTVDSLIVNVSAGRLASDIYTASIDLGGQEVEASDLRKVLVAASQQSMRQDRAILHSLPTGYSLDGERGIRDPLSMYGDLLGVDMHVVTVERTALKNLELCVNRAHLSVEGMVATPYASGLAALVDDEVELGCAAIDMGGGTTTISVFAEGRLIHTDAIGLGGHHVTTDLARGLSTRIEDAERLKVVHGSALLNGADERDMISIPPIGEDDRDQPSQVSRALVTRIVRARIEETLELIRDRIQKSGFSPIVGKRVVLTGGASQLTGLPETARRILARNVRIGRPMGVAGLPVAAKGPAFSTACGLMIYPQVADIEIHAAQGGMFSPFGNGSGRIARVGQWLKESF.

This sequence belongs to the FtsA/MreB family. Self-interacts. Interacts with FtsZ.

The protein resides in the cell inner membrane. Its function is as follows. Cell division protein that is involved in the assembly of the Z ring. May serve as a membrane anchor for the Z ring. This chain is Cell division protein FtsA, found in Agrobacterium fabrum (strain C58 / ATCC 33970) (Agrobacterium tumefaciens (strain C58)).